A 150-amino-acid polypeptide reads, in one-letter code: Transcription antitermination protein NusB (150 aa).

This sequence belongs to the NusB family.

In terms of biological role, involved in transcription antitermination. Required for transcription of ribosomal RNA (rRNA) genes. Binds specifically to the boxA antiterminator sequence of the ribosomal RNA (rrn) operons. This chain is Transcription antitermination protein NusB, found in Streptococcus pyogenes serotype M2 (strain MGAS10270).